We begin with the raw amino-acid sequence, 358 residues long: Peptide chain release factor 1 (358 aa).

N5-methylglutamine is present on Q236.

The protein belongs to the prokaryotic/mitochondrial release factor family. Methylated by PrmC. Methylation increases the termination efficiency of RF1.

The protein localises to the cytoplasm. Peptide chain release factor 1 directs the termination of translation in response to the peptide chain termination codons UAG and UAA. In Corynebacterium glutamicum (strain ATCC 13032 / DSM 20300 / JCM 1318 / BCRC 11384 / CCUG 27702 / LMG 3730 / NBRC 12168 / NCIMB 10025 / NRRL B-2784 / 534), this protein is Peptide chain release factor 1.